Reading from the N-terminus, the 63-residue chain is Jingdongin-1-MT1 (63 aa).

The N-terminal stretch at 1 to 22 (MFTLKKSLLLLFFLGTINLSLC) is a signal peptide. A propeptide spans 23–44 (EQERDADEEERRDDDEMDVEVE) (removed in mature form). A disulfide bridge connects residues Cys57 and Cys63.

Belongs to the frog skin active peptide (FSAP) family. Brevinin subfamily. Expressed by the skin glands.

The protein resides in the secreted. Its function is as follows. Antimicrobial peptide. Active against some Gram-negative and a variety of Gram-positive bacterial strains. Active against fungus C.glabrata 090902 but not against C.neoformans 201211. Shows hemolytic activity against human erythrocytes. This chain is Jingdongin-1-MT1, found in Amolops mantzorum (Sichuan torrent frog).